Here is a 347-residue protein sequence, read N- to C-terminus: Holliday junction branch migration complex subunit RuvB (347 aa).

The interval Met-1–Tyr-181 is large ATPase domain (RuvB-L). ATP is bound by residues Leu-20, Arg-21, Gly-62, Lys-65, Thr-66, Thr-67, Arg-171, Tyr-181, and Arg-218. Thr-66 is a Mg(2+) binding site. Residues Ser-182–Glu-252 form a small ATPAse domain (RuvB-S) region. Residues Lys-255–Leu-347 are head domain (RuvB-H). Residues Arg-291, Arg-310, and Arg-315 each contribute to the DNA site.

This sequence belongs to the RuvB family. In terms of assembly, homohexamer. Forms an RuvA(8)-RuvB(12)-Holliday junction (HJ) complex. HJ DNA is sandwiched between 2 RuvA tetramers; dsDNA enters through RuvA and exits via RuvB. An RuvB hexamer assembles on each DNA strand where it exits the tetramer. Each RuvB hexamer is contacted by two RuvA subunits (via domain III) on 2 adjacent RuvB subunits; this complex drives branch migration. In the full resolvosome a probable DNA-RuvA(4)-RuvB(12)-RuvC(2) complex forms which resolves the HJ.

It is found in the cytoplasm. The enzyme catalyses ATP + H2O = ADP + phosphate + H(+). In terms of biological role, the RuvA-RuvB-RuvC complex processes Holliday junction (HJ) DNA during genetic recombination and DNA repair, while the RuvA-RuvB complex plays an important role in the rescue of blocked DNA replication forks via replication fork reversal (RFR). RuvA specifically binds to HJ cruciform DNA, conferring on it an open structure. The RuvB hexamer acts as an ATP-dependent pump, pulling dsDNA into and through the RuvAB complex. RuvB forms 2 homohexamers on either side of HJ DNA bound by 1 or 2 RuvA tetramers; 4 subunits per hexamer contact DNA at a time. Coordinated motions by a converter formed by DNA-disengaged RuvB subunits stimulates ATP hydrolysis and nucleotide exchange. Immobilization of the converter enables RuvB to convert the ATP-contained energy into a lever motion, pulling 2 nucleotides of DNA out of the RuvA tetramer per ATP hydrolyzed, thus driving DNA branch migration. The RuvB motors rotate together with the DNA substrate, which together with the progressing nucleotide cycle form the mechanistic basis for DNA recombination by continuous HJ branch migration. Branch migration allows RuvC to scan DNA until it finds its consensus sequence, where it cleaves and resolves cruciform DNA. This is Holliday junction branch migration complex subunit RuvB from Zymomonas mobilis subsp. mobilis (strain ATCC 31821 / ZM4 / CP4).